Reading from the N-terminus, the 186-residue chain is tRNA (cytidine(56)-2'-O)-methyltransferase (186 aa).

S-adenosyl-L-methionine contacts are provided by residues Leu84 and 110–114 (GAEKV).

It belongs to the aTrm56 family. Homodimer.

It localises to the cytoplasm. It carries out the reaction cytidine(56) in tRNA + S-adenosyl-L-methionine = 2'-O-methylcytidine(56) in tRNA + S-adenosyl-L-homocysteine + H(+). Its function is as follows. Specifically catalyzes the AdoMet-dependent 2'-O-ribose methylation of cytidine at position 56 in tRNAs. This is tRNA (cytidine(56)-2'-O)-methyltransferase from Staphylothermus marinus (strain ATCC 43588 / DSM 3639 / JCM 9404 / F1).